A 540-amino-acid polypeptide reads, in one-letter code: MAAKDVKFGNDARVKMLRGVNVLADAVKVTLGPKGRNVVLDKSFGAPTITKDGVSVAREIELEDKFENMGAQMVKEVASKANDAAGDGTTTATVLAQSIITEGLKAVAAGMNPMDLKRGIDKAVAAAVEELKTLSVPCSDSKAIAQVGTISANSDETVGKLIAEAMDKVGKEGVITVEDGTGLQDELDVVEGMQFDRGYLSPYFINKPETGAVELESPFILLADKKISNIREMLPVLEAVAKAGKPLLIIAEDVEGEALATLVVNTMRGIVKVAAVKAPGFGDRRKAMLQDIATLTGGTVISEEIGMELEKSTLEDLGQAKRVVINKDTTTIIDGVGEESAIQGRVTQIRQQIEEATSDYDREKLQERVAKLAGGVAVIKVGAATEVEMKEKKARVEDALHATRAAVEEGVVAGGGVALIRVASKIAELKGQNEDQNVGIKVALRAMESPLRQIVLNCGEEPSVVANTVKSGDGNYGYNAATEEYGNMIDMGILDPTKVTRSALQYAASVAGLMITTECMVTDLPKGDAPDLGAAGGMGG.

Residues 30–33, Lys-51, 87–91, Gly-415, 479–481, and Asp-495 each bind ATP; these read TLGP, DGTTT, and NAA.

This sequence belongs to the chaperonin (HSP60) family. In terms of assembly, forms a cylinder of 14 subunits composed of two heptameric rings stacked back-to-back. Interacts with the co-chaperonin GroES.

Its subcellular location is the cytoplasm. The enzyme catalyses ATP + H2O + a folded polypeptide = ADP + phosphate + an unfolded polypeptide.. Together with its co-chaperonin GroES, plays an essential role in assisting protein folding. The GroEL-GroES system forms a nano-cage that allows encapsulation of the non-native substrate proteins and provides a physical environment optimized to promote and accelerate protein folding. This is Chaperonin GroEL from Raoultella planticola (Klebsiella planticola).